The following is a 465-amino-acid chain: Ribulose bisphosphate carboxylase large chain (465 aa).

N6,N6,N6-trimethyllysine is present on Lys4. Asn113 and Thr163 together coordinate substrate. Lys165 acts as the Proton acceptor in catalysis. Position 167 (Lys167) interacts with substrate. 3 residues coordinate Mg(2+): Lys191, Asp193, and Glu194. An N6-carboxylysine modification is found at Lys191. His284 serves as the catalytic Proton acceptor. Substrate contacts are provided by Arg285, His317, and Ser369.

It belongs to the RuBisCO large chain family. Type I subfamily. Heterohexadecamer of 8 large chains and 8 small chains; disulfide-linked. The disulfide link is formed within the large subunit homodimers. Mg(2+) serves as cofactor. In terms of processing, the disulfide bond which can form in the large chain dimeric partners within the hexadecamer appears to be associated with oxidative stress and protein turnover.

Its subcellular location is the plastid. It localises to the chloroplast. The enzyme catalyses 2 (2R)-3-phosphoglycerate + 2 H(+) = D-ribulose 1,5-bisphosphate + CO2 + H2O. It carries out the reaction D-ribulose 1,5-bisphosphate + O2 = 2-phosphoglycolate + (2R)-3-phosphoglycerate + 2 H(+). Functionally, ruBisCO catalyzes two reactions: the carboxylation of D-ribulose 1,5-bisphosphate, the primary event in carbon dioxide fixation, as well as the oxidative fragmentation of the pentose substrate in the photorespiration process. Both reactions occur simultaneously and in competition at the same active site. This is Ribulose bisphosphate carboxylase large chain from Hamamelis mollis (Chinese witch hazel).